A 347-amino-acid chain; its full sequence is Probable dual-specificity RNA methyltransferase RlmN (347 aa).

E91 functions as the Proton acceptor in the catalytic mechanism. The 231-residue stretch at Y97–D327 folds into the Radical SAM core domain. C104 and C332 form a disulfide bridge. C111, C115, and C118 together coordinate [4Fe-4S] cluster. S-adenosyl-L-methionine is bound by residues G158–E159, S190, S213–H215, and N289. C332 (S-methylcysteine intermediate) is an active-site residue.

This sequence belongs to the radical SAM superfamily. RlmN family. [4Fe-4S] cluster serves as cofactor.

The protein localises to the cytoplasm. It catalyses the reaction adenosine(2503) in 23S rRNA + 2 reduced [2Fe-2S]-[ferredoxin] + 2 S-adenosyl-L-methionine = 2-methyladenosine(2503) in 23S rRNA + 5'-deoxyadenosine + L-methionine + 2 oxidized [2Fe-2S]-[ferredoxin] + S-adenosyl-L-homocysteine. The catalysed reaction is adenosine(37) in tRNA + 2 reduced [2Fe-2S]-[ferredoxin] + 2 S-adenosyl-L-methionine = 2-methyladenosine(37) in tRNA + 5'-deoxyadenosine + L-methionine + 2 oxidized [2Fe-2S]-[ferredoxin] + S-adenosyl-L-homocysteine. Its function is as follows. Specifically methylates position 2 of adenine 2503 in 23S rRNA and position 2 of adenine 37 in tRNAs. The protein is Probable dual-specificity RNA methyltransferase RlmN of Clostridium perfringens (strain 13 / Type A).